The primary structure comprises 511 residues: Aldehyde dehydrogenase 2, mitochondrial (511 aa).

A mitochondrion-targeting transit peptide spans 1–21 (MSKSKTKTDKRNQSSLSRIKL). A disordered region spans residues 72–92 (VSEKSQHDSTEEDITQVSEKS). 274–279 (GSTLVG) contributes to the NAD(+) binding site. E297 (proton acceptor) is an active-site residue. Catalysis depends on C331, which acts as the Nucleophile.

The protein belongs to the aldehyde dehydrogenase family.

The protein resides in the mitochondrion matrix. The catalysed reaction is an aldehyde + NAD(+) + H2O = a carboxylate + NADH + 2 H(+). Its pathway is alcohol metabolism; ethanol degradation; acetate from ethanol: step 2/2. The sequence is that of Aldehyde dehydrogenase 2, mitochondrial (ALD2) from Saccharomyces cerevisiae (Baker's yeast).